A 355-amino-acid polypeptide reads, in one-letter code: Probable low-specificity L-threonine aldolase 2 (355 aa).

An N6-(pyridoxal phosphate)lysine modification is found at K211.

The protein belongs to the threonine aldolase family. Pyridoxal 5'-phosphate is required as a cofactor. As to expression, expressed in roots, leaf vasculature and flowers.

The enzyme catalyses L-threonine = acetaldehyde + glycine. It catalyses the reaction L-allo-threonine = acetaldehyde + glycine. It functions in the pathway amino-acid degradation; L-threonine degradation via aldolase pathway; acetaldehyde and glycine from L-threonine: step 1/1. In terms of biological role, threonine aldolase involved in threonine degradation to glycine. May play a role in the removal of L-allo-threonine. In Arabidopsis thaliana (Mouse-ear cress), this protein is Probable low-specificity L-threonine aldolase 2 (THA2).